Reading from the N-terminus, the 553-residue chain is Arginine--tRNA ligase (553 aa).

The short motif at 123–133 (ANPTGPLTIGR) is the 'HIGH' region element.

It belongs to the class-I aminoacyl-tRNA synthetase family. In terms of assembly, monomer.

The protein localises to the cytoplasm. The catalysed reaction is tRNA(Arg) + L-arginine + ATP = L-arginyl-tRNA(Arg) + AMP + diphosphate. This is Arginine--tRNA ligase from Chlorobium phaeobacteroides (strain BS1).